The sequence spans 140 residues: Large ribosomal subunit protein uL14 (140 aa).

Ser-17 carries the post-translational modification Phosphoserine. A Phosphotyrosine modification is found at Tyr-38.

It belongs to the universal ribosomal protein uL14 family. Component of the large ribosomal subunit.

The protein resides in the cytoplasm. In terms of biological role, component of the large ribosomal subunit. The ribosome is a large ribonucleoprotein complex responsible for the synthesis of proteins in the cell. In Pongo abelii (Sumatran orangutan), this protein is Large ribosomal subunit protein uL14 (RPL23).